Consider the following 152-residue polypeptide: Xanthine-guanine phosphoribosyltransferase (152 aa).

5-phospho-alpha-D-ribose 1-diphosphate-binding positions include 37 to 38, R69, and 88 to 96; these read RG and DDLVDTGGT. R69 is a GMP binding site. D89 is a binding site for Mg(2+). Residues D92 and I135 each contribute to the guanine site. 2 residues coordinate xanthine: D92 and I135. GMP contacts are provided by residues 92-96 and 134-135; these read DTGGT and WI.

This sequence belongs to the purine/pyrimidine phosphoribosyltransferase family. XGPT subfamily. In terms of assembly, homotetramer. Requires Mg(2+) as cofactor.

Its subcellular location is the cell inner membrane. The catalysed reaction is GMP + diphosphate = guanine + 5-phospho-alpha-D-ribose 1-diphosphate. It carries out the reaction XMP + diphosphate = xanthine + 5-phospho-alpha-D-ribose 1-diphosphate. It catalyses the reaction IMP + diphosphate = hypoxanthine + 5-phospho-alpha-D-ribose 1-diphosphate. It participates in purine metabolism; GMP biosynthesis via salvage pathway; GMP from guanine: step 1/1. The protein operates within purine metabolism; XMP biosynthesis via salvage pathway; XMP from xanthine: step 1/1. Purine salvage pathway enzyme that catalyzes the transfer of the ribosyl-5-phosphate group from 5-phospho-alpha-D-ribose 1-diphosphate (PRPP) to the N9 position of the 6-oxopurines guanine and xanthine to form the corresponding ribonucleotides GMP (guanosine 5'-monophosphate) and XMP (xanthosine 5'-monophosphate), with the release of PPi. To a lesser extent, also acts on hypoxanthine. This is Xanthine-guanine phosphoribosyltransferase from Pectobacterium carotovorum subsp. carotovorum (strain PC1).